The following is a 323-amino-acid chain: Cyclin-H (323 aa).

Residue serine 5 is modified to Phosphoserine; by CDK8. A Phosphoserine modification is found at serine 132. The segment at 296–323 is disordered; the sequence is GYEDDDYVSKKPKQEEEEWTDDDLVDAL. Serine 304 is modified (phosphoserine; by CDK8). Residues 310–323 show a composition bias toward acidic residues; that stretch reads EEEEWTDDDLVDAL. Position 315 is a phosphothreonine (threonine 315).

It belongs to the cyclin family. Cyclin C subfamily. In terms of assembly, associates primarily with CDK7 and MAT1 to form the CAK complex. CAK can further associate with the core-TFIIH to form the TFIIH basal transcription factor.

The protein resides in the nucleus. In terms of biological role, regulates CDK7, the catalytic subunit of the CDK-activating kinase (CAK) enzymatic complex. CAK activates the cyclin-associated kinases CDK1, CDK2, CDK4 and CDK6 by threonine phosphorylation. CAK complexed to the core-TFIIH basal transcription factor activates RNA polymerase II by serine phosphorylation of the repetitive C-terminal domain (CTD) of its large subunit (POLR2A), allowing its escape from the promoter and elongation of the transcripts. Involved in cell cycle control and in RNA transcription by RNA polymerase II. Its expression and activity are constant throughout the cell cycle. The chain is Cyclin-H (Ccnh) from Rattus norvegicus (Rat).